The primary structure comprises 357 residues: 2-oxoglutarate-dependent dioxygenase 11 (357 aa).

Residues 207 to 307 form the Fe2OG dioxygenase domain; it reads QPRGLRMAYY…RISAALFHYP (101 aa). Fe cation is bound by residues His-231, Asp-233, and His-288. Arg-298 is a binding site for 2-oxoglutarate.

Belongs to the iron/ascorbate-dependent oxidoreductase family. Fe(2+) serves as cofactor. The cofactor is L-ascorbate. As to expression, expressed in shoots.

It localises to the cytoplasm. It catalyses the reaction melatonin + 2-oxoglutarate + O2 = 2-hydroxymelatonin + succinate + CO2. Its function is as follows. Involved in melatonin degradation. Catalyzes the hydroxylation of melatonin to produce 2-hydroxymelatonin. In Oryza sativa subsp. japonica (Rice), this protein is 2-oxoglutarate-dependent dioxygenase 11.